Consider the following 33-residue polypeptide: Photosystem II reaction center protein Psb30 (33 aa).

The chain crosses the membrane as a helical span at residues 8–28 (QLGSLLLITVAGPLIVFFLFI).

This sequence belongs to the Psb30/Ycf12 family. In terms of assembly, PSII is composed of 1 copy each of membrane proteins PsbA, PsbB, PsbC, PsbD, PsbE, PsbF, PsbH, PsbI, PsbJ, PsbK, PsbL, PsbM, PsbT, PsbY, PsbZ, Psb30/Ycf12, peripheral proteins of the oxygen-evolving complex and a large number of cofactors. It forms dimeric complexes.

It is found in the plastid. The protein localises to the chloroplast thylakoid membrane. A core subunit of photosystem II (PSII), probably helps stabilize the reaction center. The chain is Photosystem II reaction center protein Psb30 from Euglena anabaena (Euglenaria anabaena).